The chain runs to 536 residues: Signal peptide peptidase-like 5 (536 aa).

Residues 1–29 (MSLPPFTCRLLAAAAALYLIGLLCVGADT) form the signal peptide. Residues 30–186 (KDVTAPKIPG…VELLLYAPKS (157 aa)) are Lumenal-facing. Positions 94-170 (SNLTSKLSWS…TSSGDALKKS (77 aa)) constitute a PA domain. N-linked (GlcNAc...) asparagine glycosylation is found at Asn-95 and Asn-151. A helical membrane pass occupies residues 187-207 (PIVDYAVVFLWLMSVGTVFVA). At 208-243 (SVWSHVTSPKKNDEQYDELSPKKSSNVDATKGGAEE) the chain is on the cytoplasmic side. The tract at residues 218-238 (KNDEQYDELSPKKSSNVDATK) is disordered. The helical transmembrane segment at 244–264 (ETLDISAMGAVIFVISASTFL) threads the bilayer. Residues 265 to 273 (VLLFFFMSS) are Lumenal-facing. The chain crosses the membrane as a helical span at residues 274–296 (WFILILTIFFVIGGMQGMHNINV). Topologically, residues 297–318 (TLITRRCSKCGQKNLKLPLLGN) are cytoplasmic. The helical transmembrane segment at 319 to 339 (TSILSLVVLLFCFVVAILWFM) threads the bilayer. The Lumenal segment spans residues 340-344 (NRKTS). A helical membrane pass occupies residues 345-365 (HAWAGQDIFGICMMINVLQVA). Over 366–374 (RLPNIRVAT) the chain is Cytoplasmic. The helical transmembrane segment at 375-395 (ILLCCAFFYDIFWVFISPLIF) threads the bilayer. Asp-384 is a catalytic residue. The Lumenal segment spans residues 396–428 (KQSVMIAVARGSKDTGESIPMLLRIPRLSDPWG). A helical membrane pass occupies residues 429 to 449 (GYNMIGFGDILFPGLLICFIF). Residue Asp-437 is part of the active site. Over 450–463 (RFDKENNKGVSNGY) the chain is Cytoplasmic. Residues 464 to 484 (FPWLMFGYGLGLFLTYLGLYV) traverse the membrane as a helical segment. The Lumenal portion of the chain corresponds to 485–489 (MNGHG). Residues 490-510 (QPALLYLVPCTLGITVILGLV) form a helical membrane-spanning segment. Residues 491–493 (PAL) carry the PAL motif. Topologically, residues 511–536 (RKELRDLWNYGTQQPSAADVNPSPEA) are cytoplasmic.

It belongs to the peptidase A22B family. Glycosylated.

It is found in the endosome membrane. Its function is as follows. Intramembrane-cleaving aspartic protease (I-CLiP) that cleaves type II membrane signal peptides in the hydrophobic plane of the membrane. The chain is Signal peptide peptidase-like 5 (SPPL5) from Arabidopsis thaliana (Mouse-ear cress).